Here is a 373-residue protein sequence, read N- to C-terminus: DNA replication and repair protein RecF (373 aa).

30–37 serves as a coordination point for ATP; it reads GENAQGKT.

This sequence belongs to the RecF family.

It is found in the cytoplasm. The RecF protein is involved in DNA metabolism; it is required for DNA replication and normal SOS inducibility. RecF binds preferentially to single-stranded, linear DNA. It also seems to bind ATP. The chain is DNA replication and repair protein RecF from Limosilactobacillus fermentum (strain NBRC 3956 / LMG 18251) (Lactobacillus fermentum).